A 239-amino-acid polypeptide reads, in one-letter code: UDP-2,3-diacylglucosamine hydrolase (239 aa).

Positions 8, 10, 41, 78, and 113 each coordinate Mn(2+). Position 78-79 (78-79 (NR)) interacts with substrate. 5 residues coordinate substrate: aspartate 121, serine 159, asparagine 163, lysine 166, and histidine 194. Histidine 194 and histidine 196 together coordinate Mn(2+).

This sequence belongs to the LpxH family. It depends on Mn(2+) as a cofactor.

The protein localises to the cell inner membrane. The enzyme catalyses UDP-2-N,3-O-bis[(3R)-3-hydroxytetradecanoyl]-alpha-D-glucosamine + H2O = 2-N,3-O-bis[(3R)-3-hydroxytetradecanoyl]-alpha-D-glucosaminyl 1-phosphate + UMP + 2 H(+). Its pathway is glycolipid biosynthesis; lipid IV(A) biosynthesis; lipid IV(A) from (3R)-3-hydroxytetradecanoyl-[acyl-carrier-protein] and UDP-N-acetyl-alpha-D-glucosamine: step 4/6. Hydrolyzes the pyrophosphate bond of UDP-2,3-diacylglucosamine to yield 2,3-diacylglucosamine 1-phosphate (lipid X) and UMP by catalyzing the attack of water at the alpha-P atom. Involved in the biosynthesis of lipid A, a phosphorylated glycolipid that anchors the lipopolysaccharide to the outer membrane of the cell. The sequence is that of UDP-2,3-diacylglucosamine hydrolase from Shewanella oneidensis (strain ATCC 700550 / JCM 31522 / CIP 106686 / LMG 19005 / NCIMB 14063 / MR-1).